The chain runs to 465 residues: Purple acid phosphatase 2 (465 aa).

An N-terminal signal peptide occupies residues 1–32 (MGASRTGCYLLAVVLAAVMNAAIAGITSSFIR). 2 N-linked (GlcNAc...) asparagine glycosylation sites follow: Asn110 and Asn138. Position 164 (Asp164) interacts with Fe cation. N-linked (GlcNAc...) asparagine glycosylation is present at Asn172. Residues Asp193 and Tyr196 each coordinate Fe cation. Asp193 lines the Mn(2+) pocket. Residue Asn230 participates in Mn(2+) binding. Asn230 provides a ligand contact to substrate. Asn303 carries an N-linked (GlcNAc...) asparagine glycan. His315 provides a ligand contact to Mn(2+). His325 (proton donor) is an active-site residue. Residue His352 coordinates Mn(2+). A substrate-binding site is contributed by 352 to 354 (HVH). His354 contacts Fe cation. Residues Asn400 and Asn425 are each glycosylated (N-linked (GlcNAc...) asparagine).

This sequence belongs to the metallophosphoesterase superfamily. Purple acid phosphatase family. Homodimer; disulfide-linked. Fe cation serves as cofactor. The cofactor is Mn(2+). Zn(2+) is required as a cofactor. It depends on Cu(2+) as a cofactor. Requires Mg(2+) as cofactor.

The protein localises to the secreted. The catalysed reaction is a phosphate monoester + H2O = an alcohol + phosphate. The polypeptide is Purple acid phosphatase 2 (PAP2) (Ipomoea batatas (Sweet potato)).